A 298-amino-acid chain; its full sequence is Lipoyl synthase (298 aa).

7 residues coordinate [4Fe-4S] cluster: C40, C45, C51, C67, C71, C74, and S280. One can recognise a Radical SAM core domain in the interval 53–269; that stretch reads AVRRTATFMI…KEIALSKGFS (217 aa).

This sequence belongs to the radical SAM superfamily. Lipoyl synthase family. Requires [4Fe-4S] cluster as cofactor.

Its subcellular location is the cytoplasm. It catalyses the reaction [[Fe-S] cluster scaffold protein carrying a second [4Fe-4S](2+) cluster] + N(6)-octanoyl-L-lysyl-[protein] + 2 oxidized [2Fe-2S]-[ferredoxin] + 2 S-adenosyl-L-methionine + 4 H(+) = [[Fe-S] cluster scaffold protein] + N(6)-[(R)-dihydrolipoyl]-L-lysyl-[protein] + 4 Fe(3+) + 2 hydrogen sulfide + 2 5'-deoxyadenosine + 2 L-methionine + 2 reduced [2Fe-2S]-[ferredoxin]. It functions in the pathway protein modification; protein lipoylation via endogenous pathway; protein N(6)-(lipoyl)lysine from octanoyl-[acyl-carrier-protein]. Catalyzes the radical-mediated insertion of two sulfur atoms into the C-6 and C-8 positions of the octanoyl moiety bound to the lipoyl domains of lipoate-dependent enzymes, thereby converting the octanoylated domains into lipoylated derivatives. This is Lipoyl synthase from Geobacillus thermodenitrificans (strain NG80-2).